Here is a 501-residue protein sequence, read N- to C-terminus: L-aspartate decarboxylase dtxS4 (501 aa).

106–108 (KLT) provides a ligand contact to substrate. N6-(pyridoxal phosphate)lysine is present on Lys-320. Arg-474 serves as a coordination point for substrate.

It belongs to the group II decarboxylase family. Requires pyridoxal 5'-phosphate as cofactor.

It carries out the reaction L-aspartate + H(+) = beta-alanine + CO2. Its pathway is secondary metabolite biosynthesis. Its function is as follows. L-aspartate decarboxylase; part of the gene cluster that mediates the biosynthesis of destruxins, insecticidal cyclic hexadepsipeptides which induce flaccid paralysis and visceral muscle contraction in insects through targeting the calcium channels and vacuolar-type ATPases. The aldo-keto reductase dtxS3 converts alpha-ketoisocaproic acid from deaminated leucine into alpha-hydroxyisocaproic acid (HIC), which is the first substrate for destruxin assembly by dtxS1. L-aspartate decarboxylase dtxS4 converts aspartic acid into beta-alanine, the last substrate for the destruxin assembly line performed by dtxS1. The nonribosomal peptide synthetase dtxS1 synthesizes destruxins B and B2, whereas the cytochrome P450 monooxygenase dtxS2 is required to convert destruxin B into other destruxin derivatives, including destructins C, D, A and E. Destruxin E-diol (ED) is further produced in a non-enzymatic manner from destruxin E. Destruxins play an important role in virulence and escape from insect host immune defenses. In Metarhizium robertsii (strain ARSEF 23 / ATCC MYA-3075) (Metarhizium anisopliae (strain ARSEF 23)), this protein is L-aspartate decarboxylase dtxS4.